We begin with the raw amino-acid sequence, 194 residues long: Probable RNA 2'-phosphotransferase (194 aa).

It belongs to the KptA/TPT1 family.

Removes the 2'-phosphate from RNA via an intermediate in which the phosphate is ADP-ribosylated by NAD followed by a presumed transesterification to release the RNA and generate ADP-ribose 1''-2''-cyclic phosphate (APPR&gt;P). May function as an ADP-ribosylase. This chain is Probable RNA 2'-phosphotransferase, found in Escherichia coli O45:K1 (strain S88 / ExPEC).